Reading from the N-terminus, the 112-residue chain is Histone H2A, sperm (112 aa).

Gln-91 is modified (N5-methylglutamine). Residue Lys-106 forms a Glycyl lysine isopeptide (Lys-Gly) (interchain with G-Cter in ubiquitin) linkage.

The protein belongs to the histone H2A family. In terms of assembly, the nucleosome is a histone octamer containing two molecules each of H2A, H2B, H3 and H4 assembled in one H3-H4 heterotetramer and two H2A-H2B heterodimers. The octamer wraps approximately 147 bp of DNA. In terms of processing, monoubiquitination gives a specific tag for epigenetic transcriptional repression.

It is found in the nucleus. The protein resides in the chromosome. Core component of nucleosome. Nucleosomes wrap and compact DNA into chromatin, limiting DNA accessibility to the cellular machineries which require DNA as a template. Histones thereby play a central role in transcription regulation, DNA repair, DNA replication and chromosomal stability. DNA accessibility is regulated via a complex set of post-translational modifications of histones, also called histone code, and nucleosome remodeling. The polypeptide is Histone H2A, sperm (Lytechinus pictus (Painted sea urchin)).